The sequence spans 329 residues: Minor capsid protein A1 (329 aa).

The tract at residues 143 to 162 is disordered; sequence GPSPVPGPNPDPPLEPPPGT. A compositionally biased stretch (pro residues) spans 145-161; the sequence is SPVPGPNPDPPLEPPPG.

The protein resides in the virion. Minor capsid protein. This chain is Minor capsid protein A1, found in Qbeta virus (strain MX1).